A 404-amino-acid polypeptide reads, in one-letter code: 8-amino-7-oxononanoate synthase (404 aa).

Arginine 20 is a substrate binding site. 116 to 117 is a binding site for pyridoxal 5'-phosphate; that stretch reads GY. Histidine 141 contacts substrate. Serine 187, histidine 215, and threonine 243 together coordinate pyridoxal 5'-phosphate. Lysine 246 is subject to N6-(pyridoxal phosphate)lysine. Threonine 366 contacts substrate.

It belongs to the class-II pyridoxal-phosphate-dependent aminotransferase family. BioF subfamily. In terms of assembly, homodimer. It depends on pyridoxal 5'-phosphate as a cofactor.

It carries out the reaction 6-carboxyhexanoyl-[ACP] + L-alanine + H(+) = (8S)-8-amino-7-oxononanoate + holo-[ACP] + CO2. It participates in cofactor biosynthesis; biotin biosynthesis. In terms of biological role, catalyzes the decarboxylative condensation of pimeloyl-[acyl-carrier protein] and L-alanine to produce 8-amino-7-oxononanoate (AON), [acyl-carrier protein], and carbon dioxide. The polypeptide is 8-amino-7-oxononanoate synthase (Cupriavidus necator (strain ATCC 17699 / DSM 428 / KCTC 22496 / NCIMB 10442 / H16 / Stanier 337) (Ralstonia eutropha)).